The following is a 117-amino-acid chain: Photosystem II reaction center Psb28 protein (117 aa).

This sequence belongs to the Psb28 family. Part of the photosystem II complex.

It localises to the cellular thylakoid membrane. The protein is Photosystem II reaction center Psb28 protein of Prochlorococcus marinus (strain AS9601).